Reading from the N-terminus, the 289-residue chain is CCR4-associated factor 16 (289 aa).

Residues 7 to 249 (IEVRNLTYKF…SEVVNAKVNG (243 aa)) form the ABC transporter domain. 41–48 (GANGAGKS) is a binding site for ATP.

This sequence belongs to the ABC transporter superfamily. In terms of assembly, interacts with CCR4 and SSN2.

It localises to the cytoplasm. Its subcellular location is the nucleus. In Saccharomyces cerevisiae (strain ATCC 204508 / S288c) (Baker's yeast), this protein is CCR4-associated factor 16 (CAF16).